A 449-amino-acid polypeptide reads, in one-letter code: UDP-N-acetylmuramoylalanine--D-glutamate ligase (449 aa).

ATP is bound at residue 118–124; it reads GTNGKTT.

This sequence belongs to the MurCDEF family.

The protein localises to the cytoplasm. The catalysed reaction is UDP-N-acetyl-alpha-D-muramoyl-L-alanine + D-glutamate + ATP = UDP-N-acetyl-alpha-D-muramoyl-L-alanyl-D-glutamate + ADP + phosphate + H(+). It functions in the pathway cell wall biogenesis; peptidoglycan biosynthesis. Cell wall formation. Catalyzes the addition of glutamate to the nucleotide precursor UDP-N-acetylmuramoyl-L-alanine (UMA). This chain is UDP-N-acetylmuramoylalanine--D-glutamate ligase, found in Staphylococcus aureus (strain MRSA252).